A 383-amino-acid polypeptide reads, in one-letter code: MHGRRHLAASLTRALIQAPSRSISSTPSLLQTLDPSVPSPPAAGAGRLAELRRRLQADAPSLGDFTYSVEVGTRQRPLPKPKWMKETVPGGAKYAAIKAKLRELKLHTVCEEARCPNLGECWSGGETGTATATIMILGDTCTRGCRFCNVKTSRTPPPPDPDEPSNVAQAIASWGLEYIVITSVDRDDLPDQGSGHFAETVQKLKALKPEMLIEALVPDFRGDPSCVEKVATSGLHVFAHNIETVEELQRNVRDYRANFKQSIDVLEMAKEYAPPGTLTKTSIMLGCGETPDQVIRTMEKVRAADVDVITFGQYMRPSKRHMPVSEYVTPEAFEKYRALGVEMGFRYVASGPMVRSSYKAGEFYIKAMIEAERAKGTAADSSA.

Residues 25–34 (STPSLLQTLD) show a composition bias toward polar residues. The tract at residues 25-44 (STPSLLQTLDPSVPSPPAAG) is disordered. Residues Cys110, Cys115, Cys121, Cys141, Cys145, Cys148, and Ser357 each contribute to the [4Fe-4S] cluster site. One can recognise a Radical SAM core domain in the interval 126-346 (ETGTATATIM…RALGVEMGFR (221 aa)).

It belongs to the radical SAM superfamily. Lipoyl synthase family. It depends on [4Fe-4S] cluster as a cofactor.

The protein resides in the mitochondrion. The enzyme catalyses [[Fe-S] cluster scaffold protein carrying a second [4Fe-4S](2+) cluster] + N(6)-octanoyl-L-lysyl-[protein] + 2 oxidized [2Fe-2S]-[ferredoxin] + 2 S-adenosyl-L-methionine + 4 H(+) = [[Fe-S] cluster scaffold protein] + N(6)-[(R)-dihydrolipoyl]-L-lysyl-[protein] + 4 Fe(3+) + 2 hydrogen sulfide + 2 5'-deoxyadenosine + 2 L-methionine + 2 reduced [2Fe-2S]-[ferredoxin]. The protein operates within protein modification; protein lipoylation via endogenous pathway; protein N(6)-(lipoyl)lysine from octanoyl-[acyl-carrier-protein]: step 2/2. Its function is as follows. Catalyzes the radical-mediated insertion of two sulfur atoms into the C-6 and C-8 positions of the octanoyl moiety bound to the lipoyl domains of lipoate-dependent enzymes, thereby converting the octanoylated domains into lipoylated derivatives. The protein is Lipoyl synthase, mitochondrial of Zea mays (Maize).